Reading from the N-terminus, the 444-residue chain is 23S rRNA (uracil(1939)-C(5))-methyltransferase RlmD (444 aa).

The TRAM domain maps to 5 to 67; the sequence is RSRIDRTPFQ…RHFDEARTVE (63 aa). Positions 80, 86, 89, and 168 each coordinate [4Fe-4S] cluster. S-adenosyl-L-methionine is bound by residues Gln-276, Phe-305, Asn-310, Glu-326, Asp-353, and Asp-374. Cys-400 (nucleophile) is an active-site residue.

The protein belongs to the class I-like SAM-binding methyltransferase superfamily. RNA M5U methyltransferase family. RlmD subfamily.

The catalysed reaction is uridine(1939) in 23S rRNA + S-adenosyl-L-methionine = 5-methyluridine(1939) in 23S rRNA + S-adenosyl-L-homocysteine + H(+). Functionally, catalyzes the formation of 5-methyl-uridine at position 1939 (m5U1939) in 23S rRNA. The polypeptide is 23S rRNA (uracil(1939)-C(5))-methyltransferase RlmD (Stenotrophomonas maltophilia (strain R551-3)).